We begin with the raw amino-acid sequence, 1203 residues long: Probable phospholipid-transporting ATPase 11 (1203 aa).

At 1 to 71 (MTKCRRRRLH…STKYTLASFI (71 aa)) the chain is on the cytoplasmic side. Residues 72–93 (PKSLFEQFRRVANFYFLVTGVL) form a helical membrane-spanning segment. Residues 94 to 97 (SLTA) are Extracellular-facing. Residues 98–120 (LSPYSPISALLPLTFVIAASMVK) form a helical membrane-spanning segment. The Cytoplasmic segment spans residues 121–303 (EAIEDWGRKK…SRIERKMDKI (183 aa)). The chain crosses the membrane as a helical span at residues 304-325 (IYLMFGVVFLMSFIGSIVFGIE). The Extracellular segment spans residues 326 to 363 (TREDRVRNGGRTERWYLRPDNADIFFDPDRAPMAAVYH). The helical transmembrane segment at 364-381 (FFTAVMLYSYFIPISLYV) threads the bilayer. Over 382–921 (SIEIVKVLQS…HGHWCYSRIS (540 aa)) the chain is Cytoplasmic. The active-site 4-aspartylphosphate intermediate is the D429. Mg(2+) is bound by residues D866 and D870. Residues 922–941 (SMICYFFYKNITFGVTVFLY) form a helical membrane-spanning segment. At 942 to 955 (EAYTSFSAQPAYND) the chain is on the extracellular side. Residues 956–975 (WFLSLFNVFFSSLPVIALGV) form a helical membrane-spanning segment. At 976-1005 (FDQDVSARYCYKFPLLYQEGVQNLLFSWKR) the chain is on the cytoplasmic side. The chain crosses the membrane as a helical span at residues 1006 to 1028 (IIGWMFNGVFTALAIFFLCKESL). Residues 1029–1041 (KHQLYNPNGKTAG) are Extracellular-facing. A helical membrane pass occupies residues 1042-1064 (REILGGTMYTCVVWVVNLQMALA). Residues 1065–1070 (ISYFTW) lie on the Cytoplasmic side of the membrane. The chain crosses the membrane as a helical span at residues 1071-1091 (LQHIVIWGSVAFWYIFLMIYG). Over 1092 to 1108 (AITPSFSTDAYKVFIEA) the chain is Extracellular. The helical transmembrane segment at 1109–1133 (LAPAPSYWLTTLFVMFFALIPFFVF) threads the bilayer. Residues 1134 to 1203 (KSVQMRFFPG…DQLNKNFIAF (70 aa)) are Cytoplasmic-facing.

This sequence belongs to the cation transport ATPase (P-type) (TC 3.A.3) family. Type IV subfamily.

It is found in the membrane. The catalysed reaction is ATP + H2O + phospholipidSide 1 = ADP + phosphate + phospholipidSide 2.. Functionally, involved in transport of phospholipids. The polypeptide is Probable phospholipid-transporting ATPase 11 (Arabidopsis thaliana (Mouse-ear cress)).